The following is a 241-amino-acid chain: Ribonuclease PH (241 aa).

Phosphate-binding positions include Arg-89 and 127–129; that span reads GTR.

Belongs to the RNase PH family. Homohexameric ring arranged as a trimer of dimers.

It catalyses the reaction tRNA(n+1) + phosphate = tRNA(n) + a ribonucleoside 5'-diphosphate. Functionally, phosphorolytic 3'-5' exoribonuclease that plays an important role in tRNA 3'-end maturation. Removes nucleotide residues following the 3'-CCA terminus of tRNAs; can also add nucleotides to the ends of RNA molecules by using nucleoside diphosphates as substrates, but this may not be physiologically important. Probably plays a role in initiation of 16S rRNA degradation (leading to ribosome degradation) during starvation. The sequence is that of Ribonuclease PH from Xanthomonas oryzae pv. oryzae (strain MAFF 311018).